Reading from the N-terminus, the 407-residue chain is tRNA pseudouridine synthase 4 (407 aa).

The tract at residues 83 to 105 (FRPAPPHPNDRNRRRRKSNRLPD) is disordered. Catalysis depends on Asp115, which acts as the Nucleophile. The segment at 274 to 298 (TEQDINPQDGDEKINAKSPTTNSVT) is disordered. Phosphoserine is present on Ser291. Thr293 is modified (phosphothreonine). Ser296 bears the Phosphoserine mark. Residue Thr406 is modified to Phosphothreonine.

It belongs to the pseudouridine synthase TruB family.

The protein resides in the nucleus. It is found in the mitochondrion. It carries out the reaction uridine(55) in tRNA = pseudouridine(55) in tRNA. The catalysed reaction is a uridine in mRNA = a pseudouridine in mRNA. In terms of biological role, responsible for synthesis of pseudouridine from uracil-55 in the psi GC loop of transfer RNAs. Also catalyzes pseudouridylation of mRNAs with the consensus sequence 5'-GGUUCRA-3'. This Schizosaccharomyces pombe (strain 972 / ATCC 24843) (Fission yeast) protein is tRNA pseudouridine synthase 4.